The sequence spans 205 residues: ATP phosphoribosyltransferase (205 aa).

The protein belongs to the ATP phosphoribosyltransferase family. Short subfamily. In terms of assembly, heteromultimer composed of HisG and HisZ subunits.

Its subcellular location is the cytoplasm. It catalyses the reaction 1-(5-phospho-beta-D-ribosyl)-ATP + diphosphate = 5-phospho-alpha-D-ribose 1-diphosphate + ATP. It functions in the pathway amino-acid biosynthesis; L-histidine biosynthesis; L-histidine from 5-phospho-alpha-D-ribose 1-diphosphate: step 1/9. Its function is as follows. Catalyzes the condensation of ATP and 5-phosphoribose 1-diphosphate to form N'-(5'-phosphoribosyl)-ATP (PR-ATP). Has a crucial role in the pathway because the rate of histidine biosynthesis seems to be controlled primarily by regulation of HisG enzymatic activity. This is ATP phosphoribosyltransferase from Staphylococcus saprophyticus subsp. saprophyticus (strain ATCC 15305 / DSM 20229 / NCIMB 8711 / NCTC 7292 / S-41).